A 121-amino-acid polypeptide reads, in one-letter code: Large ribosomal subunit protein uL24 (121 aa).

It belongs to the universal ribosomal protein uL24 family. As to quaternary structure, part of the 50S ribosomal subunit.

Its function is as follows. One of two assembly initiator proteins, it binds directly to the 5'-end of the 23S rRNA, where it nucleates assembly of the 50S subunit. Functionally, located at the polypeptide exit tunnel on the outside of the subunit. In Pyrococcus abyssi (strain GE5 / Orsay), this protein is Large ribosomal subunit protein uL24.